A 574-amino-acid polypeptide reads, in one-letter code: Enolase 4 (574 aa).

A compositionally biased stretch (basic and acidic residues) spans 165-175 (EKERRQMEREA). A disordered region spans residues 165–221 (EKERRQMEREASPMPLQPEPSPVTSPAPGKKKGSGKGKKAAVVEKPIPPEETPEAVV). The segment covering 179 to 189 (PLQPEPSPVTS) has biased composition (pro residues). Basic residues predominate over residues 193–203 (GKKKGSGKGKK). Glu287 provides a ligand contact to substrate. Lys467 acts as the Proton acceptor in catalysis. Lys518 serves as a coordination point for substrate.

This sequence belongs to the enolase family.

It carries out the reaction (2R)-2-phosphoglycerate = phosphoenolpyruvate + H2O. The protein operates within carbohydrate degradation; glycolysis; pyruvate from D-glyceraldehyde 3-phosphate: step 4/5. In Xenopus tropicalis (Western clawed frog), this protein is Enolase 4 (eno4).